A 607-amino-acid polypeptide reads, in one-letter code: BTB/POZ domain-containing protein DOT3 (607 aa).

In terms of domain architecture, BTB spans 52–121; that stretch reads TDLSIQVNDI…CYNLPLDLNP (70 aa). Positions 211–487 constitute an NPH3 domain; it reads RCLYNDIATL…VQINTQVLFS (277 aa). Phosphotyrosine is present on tyrosine 428. 2 disordered regions span residues 498–520 and 573–607; these read DKLP…SRDN and KSFQ…MSMS. Basic and acidic residues-rich tracts occupy residues 499–520 and 577–586; these read KLPE…SRDN and TKREDEETRE. Residues 511 to 563 adopt a coiled-coil conformation; it reads REDKRMSRDNEIIKTLKEELENVKKKMSELQSDYNELQQEYERLSSKQKSSHN.

This sequence belongs to the NPH3 family. In terms of tissue distribution, expressed in emerging leaf primordia.

Its pathway is protein modification; protein ubiquitination. Functionally, may act as a substrate-specific adapter of an E3 ubiquitin-protein ligase complex (CUL3-RBX1-BTB) which mediates the ubiquitination and subsequent proteasomal degradation of target proteins. Involved in leaf vasculature patterning. This Arabidopsis thaliana (Mouse-ear cress) protein is BTB/POZ domain-containing protein DOT3.